We begin with the raw amino-acid sequence, 379 residues long: Chaperone protein DnaJ (379 aa).

The 66-residue stretch at D5 to G70 folds into the J domain. The CR-type zinc-finger motif lies at G135–S213. 8 residues coordinate Zn(2+): C148, C151, C165, C168, C187, C190, C201, and C204. 4 CXXCXGXG motif repeats span residues C148–G155, C165–G172, C187–G194, and C201–G208.

It belongs to the DnaJ family. In terms of assembly, homodimer. Requires Zn(2+) as cofactor.

It localises to the cytoplasm. In terms of biological role, participates actively in the response to hyperosmotic and heat shock by preventing the aggregation of stress-denatured proteins and by disaggregating proteins, also in an autonomous, DnaK-independent fashion. Unfolded proteins bind initially to DnaJ; upon interaction with the DnaJ-bound protein, DnaK hydrolyzes its bound ATP, resulting in the formation of a stable complex. GrpE releases ADP from DnaK; ATP binding to DnaK triggers the release of the substrate protein, thus completing the reaction cycle. Several rounds of ATP-dependent interactions between DnaJ, DnaK and GrpE are required for fully efficient folding. Also involved, together with DnaK and GrpE, in the DNA replication of plasmids through activation of initiation proteins. The protein is Chaperone protein DnaJ of Legionella pneumophila (strain Lens).